A 499-amino-acid chain; its full sequence is MRNGTLLLAALLAVFILAGSSAAADVGVELDKNNTKPVYNSTLRVKVIAKAGNQNVQNAVATVKVPEGLVLQDYYTAQGYYDLETGTWEIGDIPAYEERSLTLVCLLNRTGNVTVTANVTADGDENPANNNAQLKFRVRGIADLELNVTSSKQSARLGDTVTFNVKLKNRGPHAANNINVANFFSGGLAIQSYSYTTGYFDDVAREWILETLDTGEEATLTVVCLVNRTGDLSDYVSVREVDEGDVNVYNNIARASVAVKGTDLDLDLSVSKPRAYQGDVVNVVCRVKNNGPEAAQNARVNLQLPANLQVQNVQVDRGTYSNGVWVIGDLADNEAALLNITARVVSAGNFTVNATAVSPAIDDSNPVNNDDTALVSAAIPKKALKVRIKNNSAVTIRVLLYVNINDHGKITRKTYNFYLKNGLSRDLSLGYFQLGTSALFKQYTYNTNYRPRTVSYENTYNATSVITQRVNVSGVKGRQKAPVVRIATLLLDENGTSLQ.

This is an uncharacterized protein from Methanothermobacter thermautotrophicus (Methanobacterium thermoformicicum).